A 158-amino-acid chain; its full sequence is Transcription elongation factor GreA (158 aa).

Residues 45-72 adopt a coiled-coil conformation; sequence AEYHAAREQQSFIEGRIKQLEGELSHAE.

The protein belongs to the GreA/GreB family.

In terms of biological role, necessary for efficient RNA polymerase transcription elongation past template-encoded arresting sites. The arresting sites in DNA have the property of trapping a certain fraction of elongating RNA polymerases that pass through, resulting in locked ternary complexes. Cleavage of the nascent transcript by cleavage factors such as GreA or GreB allows the resumption of elongation from the new 3'terminus. GreA releases sequences of 2 to 3 nucleotides. The chain is Transcription elongation factor GreA from Xylella fastidiosa (strain M23).